The primary structure comprises 577 residues: 2-succinyl-5-enolpyruvyl-6-hydroxy-3-cyclohexene-1-carboxylate synthase (577 aa).

Belongs to the TPP enzyme family. MenD subfamily. In terms of assembly, homodimer. Mg(2+) serves as cofactor. It depends on Mn(2+) as a cofactor. Requires thiamine diphosphate as cofactor.

It carries out the reaction isochorismate + 2-oxoglutarate + H(+) = 5-enolpyruvoyl-6-hydroxy-2-succinyl-cyclohex-3-ene-1-carboxylate + CO2. It functions in the pathway quinol/quinone metabolism; 1,4-dihydroxy-2-naphthoate biosynthesis; 1,4-dihydroxy-2-naphthoate from chorismate: step 2/7. It participates in cofactor biosynthesis; phylloquinone biosynthesis. Its function is as follows. Catalyzes the thiamine diphosphate-dependent decarboxylation of 2-oxoglutarate and the subsequent addition of the resulting succinic semialdehyde-thiamine pyrophosphate anion to isochorismate to yield 2-succinyl-5-enolpyruvyl-6-hydroxy-3-cyclohexene-1-carboxylate (SEPHCHC). In Synechococcus sp. (strain CC9311), this protein is 2-succinyl-5-enolpyruvyl-6-hydroxy-3-cyclohexene-1-carboxylate synthase.